Reading from the N-terminus, the 275-residue chain is Hemin import ATP-binding protein HmuV (275 aa).

Positions 2 to 242 (LKAAGIGVRL…EWIETGFGLQ (241 aa)) constitute an ABC transporter domain. Residue 34 to 41 (GPNGAGKS) participates in ATP binding.

The protein belongs to the ABC transporter superfamily. Heme (hemin) importer (TC 3.A.1.14.5) family. As to quaternary structure, the complex is composed of two ATP-binding proteins (HmuV), two transmembrane proteins (HmuU) and a solute-binding protein (HmuT).

It localises to the cell inner membrane. Part of the ABC transporter complex HmuTUV involved in hemin import. Responsible for energy coupling to the transport system. The protein is Hemin import ATP-binding protein HmuV of Gloeobacter violaceus (strain ATCC 29082 / PCC 7421).